We begin with the raw amino-acid sequence, 453 residues long: Chromosomal replication initiator protein DnaA (453 aa).

The interval 1–71 (MSEKEIWEKV…QAILFDVVGY (71 aa)) is domain I, interacts with DnaA modulators. The tract at residues 71 to 114 (YEVKPHFITTEELANYSNNETATPKETTKPSTETTEDNHVLGRE) is domain II. The segment at 115–331 (QFNAHNTFDT…GALTRLLAYS (217 aa)) is domain III, AAA+ region. Residues Gly159, Gly161, Lys162, and Thr163 each coordinate ATP. Residues 332–453 (QLLGKPITTE…ENLEKEIRNV (122 aa)) are domain IV, binds dsDNA.

The protein belongs to the DnaA family. In terms of assembly, oligomerizes as a right-handed, spiral filament on DNA at oriC.

Its subcellular location is the cytoplasm. In terms of biological role, plays an essential role in the initiation and regulation of chromosomal replication. ATP-DnaA binds to the origin of replication (oriC) to initiate formation of the DNA replication initiation complex once per cell cycle. Binds the DnaA box (a 9 base pair repeat at the origin) and separates the double-stranded (ds)DNA. Forms a right-handed helical filament on oriC DNA; dsDNA binds to the exterior of the filament while single-stranded (ss)DNA is stabiized in the filament's interior. The ATP-DnaA-oriC complex binds and stabilizes one strand of the AT-rich DNA unwinding element (DUE), permitting loading of DNA polymerase. After initiation quickly degrades to an ADP-DnaA complex that is not apt for DNA replication. Binds acidic phospholipids. This chain is Chromosomal replication initiator protein DnaA, found in Staphylococcus aureus (strain Mu3 / ATCC 700698).